The following is a 113-amino-acid chain: Stigma/stylar cysteine-rich adhesin (113 aa).

Residues 1–22 (MARSSAVCFLLLLAFLIGTASA) form the signal peptide. Intrachain disulfides connect C25–C72, C35–C49, C50–C95, and C70–C109.

It belongs to the plant LTP family. In terms of tissue distribution, highly expressed in style and stigma, abundant in young leaves and petals, and low expression in young anthers at pollen mother cell stage with an active tapetum. Not expressed in mature leaves or in pollen grains or tubes. Found in the stylar transmitting tract epidermis and in the stylar extracellular matrix.

Functionally, acts as an adhesive agent between the pollen tube wall and the stylar transmitting tract epidermis. Binds a stylar pectin in a pH-dependent manner. Enhances activity of chemocyanin, a diffusible chemotropic factor. The chain is Stigma/stylar cysteine-rich adhesin (SCA) from Lilium longiflorum (Trumpet lily).